Consider the following 118-residue polypeptide: Elongin-B (118 aa).

M1 carries the post-translational modification N-acetylmethionine. One can recognise a Ubiquitin-like domain in the interval 1-79 (MDVFLMIRRH…QAPATVGLAF (79 aa)). T84 carries the phosphothreonine modification. Residues 91–118 (EPFSSPPELPDVMKPQDSGGSANEQAVQ) form a disordered region. Phosphoserine is present on residues S108 and S111. A compositionally biased stretch (polar residues) spans 108–118 (SGGSANEQAVQ).

It belongs to the Elongin B family. As to quaternary structure, heterotrimer of an A (ELOA, ELOA2 or ELOA3P), ELOB and ELOC subunit. The elongin BC complex interacts with EPOP; leading to recruit the elongin BC complex to Polycomb group (PcG) target genes, thereby restricting excessive activity of the PRC2/EED-EZH2 complex. Component of multiple cullin-RING E3 ubiquitin-protein ligase complexes composed of Elongin BC (ELOB and ELOC), a cullin (either CUL2 or CUL5), a catalytic subunit (either RBX1 or RNF7/RBX2), as well as a substrate adapter protein that can be either ASB2, ASB9, ASB11, KLHDC2, KLHDC3, KLHDC10, APPBP2, FEM1A, FEM1B, FEM1C, LRR1, PCMTD1, SOCS1, SOCS2, SOCS5, SPSB1, SPSB3, ELOA, VHL, WSB1 or RAB40C. As part of the Elongin BC E3 ubiquitin ligase complex; interacts with NRBP1. May also interact with DCUN1D1, DCUN1D2, DCUN1D3 and DCUN1D5. May form oligomers as a KLHDC2/KLHDC3-ELOB-ELOC complex; this interaction is autoinhibitory for the E3 ligase complex as the substrate-binding site of KLHDC2/KLHDC3 is blocked in the oligomer.

The protein localises to the nucleus. The protein operates within protein modification; protein ubiquitination. SIII, also known as elongin, is a general transcription elongation factor that increases the RNA polymerase II transcription elongation past template-encoded arresting sites. Subunit A is transcriptionally active and its transcription activity is strongly enhanced by binding to the dimeric complex of the SIII regulatory subunits B and C (elongin BC complex). In embryonic stem cells, the elongin BC complex is recruited by EPOP to Polycomb group (PcG) target genes in order generate genomic region that display both active and repressive chromatin properties, an important feature of pluripotent stem cells. Functionally, core component of multiple cullin-2 and cullin-5-RING E3 ubiquitin-protein ligase complexes (ECS complexes), which mediate the ubiquitination of target proteins. By binding to BC-box motifs it seems to link target recruitment subunits, like VHL and members of the SOCS box family, to Cullin/RBX1 modules that activate E2 ubiquitination enzymes. Component the von Hippel-Lindau ubiquitination complex CBC(VHL). A number of ECS complexes (containing either KLHDC2, KLHDC3, KLHDC10, APPBP2, FEM1A, FEM1B or FEM1C as substrate-recognition component) are part of the DesCEND (destruction via C-end degrons) pathway, which recognizes a C-degron located at the extreme C terminus of target proteins, leading to their ubiquitination and degradation. The ECS(ASB9) complex mediates ubiquitination and degradation of CKB. As part of a multisubunit ubiquitin ligase complex, polyubiquitinates monoubiquitinated POLR2A. ECS(LRR1) ubiquitinates MCM7 and promotes CMG replisome disassembly by VCP and chromatin extraction during S-phase. As part of the ECS(RAB40C) complex, mediates ANKRD28 ubiquitination and degradation, thereby inhibiting protein phosphatase 6 (PP6) complex activity and focal adhesion assembly during cell migration. This Mus musculus (Mouse) protein is Elongin-B.